We begin with the raw amino-acid sequence, 523 residues long: MDPFHNGNKRSSISFGSSQRQPYNKNNYLSGTNGPSSAAQDQGRGPSPFGMSGNTTNGGNSKRNSGCDLSATYYASRSPMYSPLDFSPPVFSPNHSQLQQARGYAANIPVVSNLMNPSMASVCEYQSHYPLFGLDWSADDYVCLGSYKEDSRNKLQVLHSNDLLSWESVVDADVVYPVSKIQWVPSQLYPRKLATCSDSLRIWSVSPEERQFQEQINLSLCKYNRQHPANPAAADDMKVIGTFPPITSFDWNTVDTNLIISSSIDTTCIVWDLQSSHYVKTQLIAHDSEVFDVRFLTKSTQLFASCGGDGSVRVFDLRSLAHSTIIYEPPSSSVSGATAGTITPSSKGSDALLRLEPSPYDPNVLATFAADSNKIIILDMRNPESPILNLQGHGSSVNGIKWHPTKRNVLLSCGDDCQVLYWDLNSSFMEINAAGSKSPSIHGTSLEDPDGDTEMTDGGAGSGLNEDPLSLNNNSKQVCKTLETPNMMYANKTQEINNIAWRPQRGDWFGCVSGKKFQNVRVL.

The disordered stretch occupies residues 1 to 64 (MDPFHNGNKR…TTNGGNSKRN (64 aa)). Residues 9 to 40 (KRSSISFGSSQRQPYNKNNYLSGTNGPSSAAQ) show a composition bias toward polar residues. A Phosphoserine modification is found at Ser-47. Residues 52 to 64 (SGNTTNGGNSKRN) show a composition bias toward low complexity. Phosphoserine is present on Ser-65. 4 WD repeats span residues 173-213 (DVVY…RQFQ), 241-281 (GTFP…YVKT), 285-325 (AHDS…HSTI), and 392-432 (GHGS…MEIN). Positions 436–472 (SKSPSIHGTSLEDPDGDTEMTDGGAGSGLNEDPLSLN) are disordered.

It belongs to the WD repeat WDR68 family.

It is found in the cytoplasm. The protein resides in the nucleus. The sequence is that of WD repeat-containing protein YPL247C from Saccharomyces cerevisiae (strain ATCC 204508 / S288c) (Baker's yeast).